The chain runs to 121 residues: Large ribosomal subunit protein bL20 (121 aa).

The protein belongs to the bacterial ribosomal protein bL20 family.

Binds directly to 23S ribosomal RNA and is necessary for the in vitro assembly process of the 50S ribosomal subunit. It is not involved in the protein synthesizing functions of that subunit. This is Large ribosomal subunit protein bL20 from Wolbachia sp. subsp. Drosophila simulans (strain wRi).